Here is a 218-residue protein sequence, read N- to C-terminus: Protein-L-isoaspartate O-methyltransferase (218 aa).

Residue serine 52 is part of the active site.

Belongs to the methyltransferase superfamily. L-isoaspartyl/D-aspartyl protein methyltransferase family.

It is found in the cytoplasm. The enzyme catalyses [protein]-L-isoaspartate + S-adenosyl-L-methionine = [protein]-L-isoaspartate alpha-methyl ester + S-adenosyl-L-homocysteine. Catalyzes the methyl esterification of L-isoaspartyl residues in peptides and proteins that result from spontaneous decomposition of normal L-aspartyl and L-asparaginyl residues. It plays a role in the repair and/or degradation of damaged proteins. The protein is Protein-L-isoaspartate O-methyltransferase of Rhodopseudomonas palustris (strain ATCC BAA-98 / CGA009).